We begin with the raw amino-acid sequence, 316 residues long: Probable cell division protein WhiA (316 aa).

The H-T-H motif DNA-binding region spans 275–309; sequence TLKELGEMVESGKISKSGINHRLRKLDQIAEQLRN.

It belongs to the WhiA family.

In terms of biological role, involved in cell division and chromosome segregation. This chain is Probable cell division protein WhiA, found in Bacillus pumilus (strain SAFR-032).